Consider the following 361-residue polypeptide: Phospho-N-acetylmuramoyl-pentapeptide-transferase (361 aa).

Helical transmembrane passes span 25–45, 72–92, 95–115, 135–155, 169–189, 200–220, 240–260, 264–284, 289–309, and 338–358; these read TGGAMVTGALFVFMFGPWIID, TPTMGGLMILSGLTVGTLLWA, LNPYVWIVLAVTLGFGFVGFY, LLIEFTIAGAACFALVWLGRA, VMLNLGWAFVVFGAFVVVGAG, GLAIVPVMIAAASFGLISYLA, LAVLCGALLGAGLGFLWFNAP, IFMGDTGSLALGGMLGSIAVA, IVLAVIGGLFVLEAVSVIVQV, and QIVIRFWIIAVMLALAGLSTL.

This sequence belongs to the glycosyltransferase 4 family. MraY subfamily. Mg(2+) serves as cofactor.

It localises to the cell inner membrane. The enzyme catalyses UDP-N-acetyl-alpha-D-muramoyl-L-alanyl-gamma-D-glutamyl-meso-2,6-diaminopimeloyl-D-alanyl-D-alanine + di-trans,octa-cis-undecaprenyl phosphate = di-trans,octa-cis-undecaprenyl diphospho-N-acetyl-alpha-D-muramoyl-L-alanyl-D-glutamyl-meso-2,6-diaminopimeloyl-D-alanyl-D-alanine + UMP. The protein operates within cell wall biogenesis; peptidoglycan biosynthesis. Its function is as follows. Catalyzes the initial step of the lipid cycle reactions in the biosynthesis of the cell wall peptidoglycan: transfers peptidoglycan precursor phospho-MurNAc-pentapeptide from UDP-MurNAc-pentapeptide onto the lipid carrier undecaprenyl phosphate, yielding undecaprenyl-pyrophosphoryl-MurNAc-pentapeptide, known as lipid I. This chain is Phospho-N-acetylmuramoyl-pentapeptide-transferase, found in Rhodopseudomonas palustris (strain ATCC BAA-98 / CGA009).